Reading from the N-terminus, the 350-residue chain is Methylthioribose-1-phosphate isomerase (350 aa).

Substrate contacts are provided by residues 47–49, Arg89, and Gln196; that span reads RGA. Asp237 acts as the Proton donor in catalysis. Residue 247 to 248 participates in substrate binding; sequence NK.

The protein belongs to the eIF-2B alpha/beta/delta subunits family. MtnA subfamily.

It catalyses the reaction 5-(methylsulfanyl)-alpha-D-ribose 1-phosphate = 5-(methylsulfanyl)-D-ribulose 1-phosphate. The protein operates within amino-acid biosynthesis; L-methionine biosynthesis via salvage pathway; L-methionine from S-methyl-5-thio-alpha-D-ribose 1-phosphate: step 1/6. In terms of biological role, catalyzes the interconversion of methylthioribose-1-phosphate (MTR-1-P) into methylthioribulose-1-phosphate (MTRu-1-P). The chain is Methylthioribose-1-phosphate isomerase from Nitratidesulfovibrio vulgaris (strain DSM 19637 / Miyazaki F) (Desulfovibrio vulgaris).